The following is a 199-amino-acid chain: MAKVLVLSGGLSEKEKSYSSQMLDLFVKTYKEVHPNDELEFVDLNTTKHAEVFLSRNTFATYWKDVESDKWIDKLKAADKVILSCSMTNFGPTAVVKNFIDSVAVANKTFSYKYSKKGDAVGLLDHLRVMIVTTQGAPKDWYLWGSHTNWLIGTWKFLGAKYVDTFELNGTKLSVFADKKPYDVVEEFRQDALEKAKQF.

17 to 19 (SYS) is an FMN binding site.

The protein belongs to the azoreductase type 1 family. Homodimer. FMN is required as a cofactor.

It catalyses the reaction 2 a quinone + NADH + H(+) = 2 a 1,4-benzosemiquinone + NAD(+). The catalysed reaction is N,N-dimethyl-1,4-phenylenediamine + anthranilate + 2 NAD(+) = 2-(4-dimethylaminophenyl)diazenylbenzoate + 2 NADH + 2 H(+). Functionally, quinone reductase that provides resistance to thiol-specific stress caused by electrophilic quinones. Also exhibits azoreductase activity. Catalyzes the reductive cleavage of the azo bond in aromatic azo compounds to the corresponding amines. This Mycoplasmopsis synoviae (strain 53) (Mycoplasma synoviae) protein is FMN-dependent NADH:quinone oxidoreductase.